We begin with the raw amino-acid sequence, 661 residues long: 72 kDa type IV collagenase (661 aa).

The signal sequence occupies residues 1 to 30 (MTEARVSRGALAALLRALCALGCLLGRAAA). The propeptide at 31 to 110 (APSPIIKFPG…PRCGNPDVAN (80 aa)) is activation peptide. The Cysteine switch motif lies at 101–108 (PRCGNPDV). Cysteine 103 contributes to the Zn(2+) binding site. Residues 111–222 (YNFFPRKPKW…LRTLGEGQVV (112 aa)) form a collagenase-like 1 region. Ca(2+)-binding residues include aspartate 135 and aspartate 169. Residues histidine 179 and aspartate 181 each contribute to the Zn(2+) site. The Ca(2+) site is built by aspartate 186 and glycine 187. Histidine 194 provides a ligand contact to Zn(2+). Residues glycine 201, glycine 203, and aspartate 205 each coordinate Ca(2+). Position 207 (histidine 207) interacts with Zn(2+). Positions 209, 210, and 212 each coordinate Ca(2+). Residues 223–397 (RVKYGNADGE…WGFCPDQGYS (175 aa)) form a collagen-binding region. Fibronectin type-II domains lie at 229–277 (ADGE…FCPH), 287–335 (ADGQ…FCPE), and 345–393 (SEGA…FCPD). Intrachain disulfides connect cysteine 234-cysteine 260, cysteine 248-cysteine 275, cysteine 292-cysteine 318, cysteine 306-cysteine 333, cysteine 350-cysteine 376, and cysteine 364-cysteine 391. The tract at residues 398–466 (LFLVAAHEFG…GPTPTLGPVT (69 aa)) is collagenase-like 2. Histidine 404 provides a ligand contact to Zn(2+). Glutamate 405 is a catalytic residue. Zn(2+) contacts are provided by histidine 408 and histidine 414. Residues 415-661 (SQDPGALMAP…GSIKSDWLGC (247 aa)) form a required for inhibitor TIMP2 binding region. Hemopexin repeat units lie at residues 469–517 (LCKQ…WPEL), 518–564 (PEKI…GLPP), 566–614 (VQKV…WNAI), and 615–661 (PDNL…WLGC). Cysteine 470 and cysteine 661 are disulfide-bonded. 3 residues coordinate Ca(2+): aspartate 477, aspartate 522, and aspartate 570. N-linked (GlcNAc...) asparagine glycosylation is present at asparagine 574. Residue aspartate 619 coordinates Ca(2+). Residue asparagine 643 is glycosylated (N-linked (GlcNAc...) asparagine).

This sequence belongs to the peptidase M10A family. In terms of assembly, interacts (via the C-terminal hemopexin-like domains-containing region) with the integrin alpha-V/beta-3; the interaction promotes vascular invasion in angiogenic vessels and melamoma cells. Interacts (via the C-terminal PEX domain) with TIMP2 (via the C-terminal); the interaction inhibits the degradation activity. Interacts with GSK3B. It depends on Ca(2+) as a cofactor. Zn(2+) serves as cofactor. Phosphorylation on multiple sites modulates enzymatic activity. Phosphorylated by PKC in vitro. Post-translationally, the propeptide is processed by MMP14 (MT-MMP1) and MMP16 (MT-MMP3). Autocatalytic cleavage in the C-terminal produces the anti-angiogenic peptide, PEX. This processing appears to be facilitated by binding integrinv/beta3.

The protein localises to the secreted. It is found in the extracellular space. The protein resides in the extracellular matrix. Its subcellular location is the membrane. It localises to the nucleus. The enzyme catalyses Cleavage of gelatin type I and collagen types IV, V, VII, X. Cleaves the collagen-like sequence Pro-Gln-Gly-|-Ile-Ala-Gly-Gln.. In terms of biological role, ubiquitinous metalloproteinase that is involved in diverse functions such as remodeling of the vasculature, angiogenesis, tissue repair, tumor invasion, inflammation, and atherosclerotic plaque rupture. As well as degrading extracellular matrix proteins, can also act on several nonmatrix proteins such as big endothelial 1 and beta-type CGRP promoting vasoconstriction. Also cleaves KISS at a Gly-|-Leu bond. Appears to have a role in myocardial cell death pathways. Contributes to myocardial oxidative stress by regulating the activity of GSK3beta. Cleaves GSK3beta in vitro. Involved in the formation of the fibrovascular tissues. PEX, the C-terminal non-catalytic fragment of MMP2, possesses anti-angiogenic and anti-tumor properties and inhibits cell migration and cell adhesion to FGF2 and vitronectin. Ligand for integrin alpha-v/beta-3 on the surface of blood vessels. This Bos taurus (Bovine) protein is 72 kDa type IV collagenase (MMP2).